Here is a 274-residue protein sequence, read N- to C-terminus: UPF0758 protein RHE_CH01848 (274 aa).

Positions 1–37 (MAKGPVATSSDDELPFETEEPVADERSFFGGRPQKPA) are disordered. The segment covering 10–22 (SDDELPFETEEPV) has biased composition (acidic residues). In terms of domain architecture, MPN spans 152 to 274 (VLSSWSSVIQ…HVSLKGLKLI (123 aa)). Zn(2+) contacts are provided by His223, His225, and Asp236. Residues 223–236 (HNHPSGDPTPSRAD) carry the JAMM motif motif.

It belongs to the UPF0758 family.

This Rhizobium etli (strain ATCC 51251 / DSM 11541 / JCM 21823 / NBRC 15573 / CFN 42) protein is UPF0758 protein RHE_CH01848.